Here is a 121-residue protein sequence, read N- to C-terminus: Nitrogenase-stabilizing/protective protein NifW (121 aa).

The protein belongs to the NifW family. In terms of assembly, homotrimer; associates with NifD.

In terms of biological role, may protect the nitrogenase Fe-Mo protein from oxidative damage. This is Nitrogenase-stabilizing/protective protein NifW from Leptothrix cholodnii (strain ATCC 51168 / LMG 8142 / SP-6) (Leptothrix discophora (strain SP-6)).